The following is a 413-amino-acid chain: Arginine biosynthesis bifunctional protein ArgJ (413 aa).

Substrate-binding residues include Thr158, Lys184, Thr195, Glu285, Asn408, and Ser413. Thr195 serves as the catalytic Nucleophile.

It belongs to the ArgJ family. In terms of assembly, heterotetramer of two alpha and two beta chains.

Its subcellular location is the cytoplasm. The catalysed reaction is N(2)-acetyl-L-ornithine + L-glutamate = N-acetyl-L-glutamate + L-ornithine. It catalyses the reaction L-glutamate + acetyl-CoA = N-acetyl-L-glutamate + CoA + H(+). Its pathway is amino-acid biosynthesis; L-arginine biosynthesis; L-ornithine and N-acetyl-L-glutamate from L-glutamate and N(2)-acetyl-L-ornithine (cyclic): step 1/1. It functions in the pathway amino-acid biosynthesis; L-arginine biosynthesis; N(2)-acetyl-L-ornithine from L-glutamate: step 1/4. Catalyzes two activities which are involved in the cyclic version of arginine biosynthesis: the synthesis of N-acetylglutamate from glutamate and acetyl-CoA as the acetyl donor, and of ornithine by transacetylation between N(2)-acetylornithine and glutamate. The chain is Arginine biosynthesis bifunctional protein ArgJ from Agrobacterium fabrum (strain C58 / ATCC 33970) (Agrobacterium tumefaciens (strain C58)).